The primary structure comprises 436 residues: Adenylosuccinate synthetase (436 aa).

GTP-binding positions include 12 to 18 (GDEGKGK) and 40 to 42 (GHT). D13 serves as the catalytic Proton acceptor. Residues D13 and G40 each coordinate Mg(2+). IMP-binding positions include 13–16 (DEGK), 38–41 (NAGH), T128, R142, Q223, T238, and R302. Residue H41 is the Proton donor of the active site. Substrate is bound at residue 298 to 304 (TTTGRRR). Residues R304, 330–332 (KLD), and 412–414 (SLG) contribute to the GTP site.

This sequence belongs to the adenylosuccinate synthetase family. As to quaternary structure, homodimer. Mg(2+) serves as cofactor.

The protein localises to the cytoplasm. It catalyses the reaction IMP + L-aspartate + GTP = N(6)-(1,2-dicarboxyethyl)-AMP + GDP + phosphate + 2 H(+). It participates in purine metabolism; AMP biosynthesis via de novo pathway; AMP from IMP: step 1/2. Plays an important role in the de novo pathway of purine nucleotide biosynthesis. Catalyzes the first committed step in the biosynthesis of AMP from IMP. The protein is Adenylosuccinate synthetase of Prochlorococcus marinus (strain MIT 9301).